A 760-amino-acid chain; its full sequence is 5-methyltetrahydropteroyltriglutamate--homocysteine methyltransferase (760 aa).

Residues 17-20 (RELK) and lysine 118 contribute to the 5-methyltetrahydropteroyltri-L-glutamate site. L-homocysteine contacts are provided by residues 436-438 (IGS) and glutamate 489. Residues 436-438 (IGS) and glutamate 489 each bind L-methionine. 5-methyltetrahydropteroyltri-L-glutamate is bound by residues 520 to 521 (RC) and tryptophan 566. Residue aspartate 604 coordinates L-homocysteine. Aspartate 604 is a binding site for L-methionine. Glutamate 610 serves as a coordination point for 5-methyltetrahydropteroyltri-L-glutamate. Residues histidine 646, cysteine 648, and glutamate 670 each coordinate Zn(2+). Histidine 699 (proton donor) is an active-site residue. Position 731 (cysteine 731) interacts with Zn(2+).

It belongs to the vitamin-B12 independent methionine synthase family. The cofactor is Zn(2+).

It catalyses the reaction 5-methyltetrahydropteroyltri-L-glutamate + L-homocysteine = tetrahydropteroyltri-L-glutamate + L-methionine. The protein operates within amino-acid biosynthesis; L-methionine biosynthesis via de novo pathway; L-methionine from L-homocysteine (MetE route): step 1/1. Functionally, catalyzes the transfer of a methyl group from 5-methyltetrahydrofolate to homocysteine resulting in methionine formation. In Vibrio harveyi (Beneckea harveyi), this protein is 5-methyltetrahydropteroyltriglutamate--homocysteine methyltransferase.